Here is a 691-residue protein sequence, read N- to C-terminus: Protein simr-1 (691 aa).

The Tudor; degenerate domain maps to 139 to 204 (EAEITPGTIY…TLFHLGKFTI (66 aa)). 2 disordered regions span residues 547-573 (TGPCGSNTSRPTAQNTANSSINQDMSI) and 588-618 (DNLNDTENWPNSEREQSATEMESGAEATTNS). Polar residues-rich tracts occupy residues 549–573 (PCGSNTSRPTAQNTANSSINQDMSI) and 588–598 (DNLNDTENWPN).

It localises to the cytoplasm. The protein localises to the perinuclear region. Acts downstream of piRNA production to promote mediator complex-dependent endogenous siRNA biogenesis from piRNA-target mRNAs in the RNA interference pathway in germ cells. Not required to identify target mRNA by the piRNA pathway. Plays a role in both spermatogenesis and oogenesis and in maintaining fertility over multiple generations, probably by directing mutator-dependent silencing to piRNA-targeted genes. The polypeptide is Protein simr-1 (Caenorhabditis elegans).